The chain runs to 427 residues: Glutamate-1-semialdehyde 2,1-aminomutase (427 aa).

Position 265 is an N6-(pyridoxal phosphate)lysine (K265).

This sequence belongs to the class-III pyridoxal-phosphate-dependent aminotransferase family. HemL subfamily. Homodimer. Requires pyridoxal 5'-phosphate as cofactor.

The protein localises to the cytoplasm. The enzyme catalyses (S)-4-amino-5-oxopentanoate = 5-aminolevulinate. It functions in the pathway porphyrin-containing compound metabolism; protoporphyrin-IX biosynthesis; 5-aminolevulinate from L-glutamyl-tRNA(Glu): step 2/2. The polypeptide is Glutamate-1-semialdehyde 2,1-aminomutase (Burkholderia pseudomallei (strain 1710b)).